Reading from the N-terminus, the 213-residue chain is DELTA-actitoxin-Aas1a (213 aa).

The first 19 residues, 1-19, serve as a signal peptide directing secretion; that stretch reads MSRLIIAFIVVTMVCSAIA. The propeptide occupies 20 to 34; sequence LPKKKVEPLEKDEKR. A plays an important role in the hemolytic activity region spans residues 37–46; the sequence is AVAGAVIEGG. Residues 45 to 64 are N-terminal region; it reads GGNLVMSVLDRILEAIGDVN. The phosphocholine site is built by Ser88, Val121, Ser139, Pro141, Tyr167, Tyr171, and Tyr172. Positions 139–154 are trp-rich region, which is important for the binding to lipid membrane; that stretch reads SIPYDYNLYSNWWNVK. Positions 178–180 match the Cell attachment site, crucial for protein stability motif; that stretch reads KGD.

This sequence belongs to the actinoporin family. Sea anemone subfamily. Octamer or nonamer in membranes. Monomer in the soluble state.

It localises to the secreted. It is found in the nematocyst. The protein resides in the target cell membrane. Functionally, pore-forming protein that forms cation-selective hydrophilic pores of around 1 nm and causes cytolysis. Pore formation is a multi-step process that involves specific recognition of membrane sphingomyelin (but neither cholesterol nor phosphatidylcholine) using aromatic rich region and adjacent phosphocholine (POC) binding site, firm binding to the membrane (mainly driven by hydrophobic interactions) accompanied by the transfer of the N-terminal region to the lipid-water interface and finally pore formation after oligomerization of monomers. This protein shows potent hemolytic activity (EC(50)=8.8 ng/ml) that is specifically inhibited by sphingomyelin. Shows no phospholipase A2 activity, nor antimicrobial activity against the four bacteria tested. Is lethal to crayfish. The protein is DELTA-actitoxin-Aas1a of Anthopleura asiatica (Sea anemone).